The primary structure comprises 199 residues: Adenosylcobinamide-GDP ribazoletransferase (199 aa).

2 helical membrane-spanning segments follow: residues 2–22 and 61–81; these read LAGG…VFAV and IAAV…VAAL.

Belongs to the CobS family. Mg(2+) is required as a cofactor.

The protein localises to the cell membrane. It carries out the reaction alpha-ribazole + adenosylcob(III)inamide-GDP = adenosylcob(III)alamin + GMP + H(+). The enzyme catalyses alpha-ribazole 5'-phosphate + adenosylcob(III)inamide-GDP = adenosylcob(III)alamin 5'-phosphate + GMP + H(+). It participates in cofactor biosynthesis; adenosylcobalamin biosynthesis; adenosylcobalamin from cob(II)yrinate a,c-diamide: step 7/7. Functionally, joins adenosylcobinamide-GDP and alpha-ribazole to generate adenosylcobalamin (Ado-cobalamin). Also synthesizes adenosylcobalamin 5'-phosphate from adenosylcobinamide-GDP and alpha-ribazole 5'-phosphate. This chain is Adenosylcobinamide-GDP ribazoletransferase, found in Halobacterium salinarum (strain ATCC 700922 / JCM 11081 / NRC-1) (Halobacterium halobium).